A 374-amino-acid polypeptide reads, in one-letter code: Ribosomal RNA large subunit methyltransferase G (374 aa).

The protein belongs to the methyltransferase superfamily. RlmG family.

The protein localises to the cytoplasm. It carries out the reaction guanosine(1835) in 23S rRNA + S-adenosyl-L-methionine = N(2)-methylguanosine(1835) in 23S rRNA + S-adenosyl-L-homocysteine + H(+). In terms of biological role, specifically methylates the guanine in position 1835 (m2G1835) of 23S rRNA. The sequence is that of Ribosomal RNA large subunit methyltransferase G from Pseudomonas aeruginosa (strain ATCC 15692 / DSM 22644 / CIP 104116 / JCM 14847 / LMG 12228 / 1C / PRS 101 / PAO1).